A 576-amino-acid chain; its full sequence is Probable metalloreductase AIM14 (576 aa).

7 helical membrane passes run 21 to 41, 70 to 90, 101 to 118, 142 to 162, 177 to 197, 204 to 224, and 230 to 250; these read IKYG…LALL, AIHL…HYSL, LGRL…LTLR, IITV…AIDD, FVGF…IGPM, LFYI…PIHS, and FPFL…RIVF. A Ferric oxidoreductase domain is found at 101–219; sequence LGRLSYALIP…NLVNVAFILL (119 aa). Residues 250–388 form the FAD-binding FR-type domain; it reads FAKSLMILNK…GGSGISFALP (139 aa). Residues 480–505 are compositionally biased toward polar residues; that stretch reads ISNFNSENADSNDNTPETSHSPTKEN. The disordered stretch occupies residues 480–507; sequence ISNFNSENADSNDNTPETSHSPTKENGS.

It belongs to the ferric reductase (FRE) family. AIM14 subfamily. In terms of assembly, interacts with ribosomes.

It localises to the membrane. In terms of biological role, probable cell surface metalloreductase. May be involved in iron or copper homeostasis. This chain is Probable metalloreductase AIM14 (AIM14), found in Saccharomyces cerevisiae (strain Lalvin EC1118 / Prise de mousse) (Baker's yeast).